The chain runs to 288 residues: Acetyl-coenzyme A carboxylase carboxyl transferase subunit beta (288 aa).

The region spanning 30–288 (IMTKCPKCKK…KLHQEVKKDA (259 aa)) is the CoA carboxyltransferase N-terminal domain. The Zn(2+) site is built by C34, C37, C53, and C56. The segment at 34–56 (CPKCKKIMYTKELNENLNVCFNC) adopts a C4-type zinc-finger fold.

This sequence belongs to the AccD/PCCB family. As to quaternary structure, acetyl-CoA carboxylase is a heterohexamer composed of biotin carboxyl carrier protein (AccB), biotin carboxylase (AccC) and two subunits each of ACCase subunit alpha (AccA) and ACCase subunit beta (AccD). It depends on Zn(2+) as a cofactor.

The protein resides in the cytoplasm. It catalyses the reaction N(6)-carboxybiotinyl-L-lysyl-[protein] + acetyl-CoA = N(6)-biotinyl-L-lysyl-[protein] + malonyl-CoA. Its pathway is lipid metabolism; malonyl-CoA biosynthesis; malonyl-CoA from acetyl-CoA: step 1/1. Component of the acetyl coenzyme A carboxylase (ACC) complex. Biotin carboxylase (BC) catalyzes the carboxylation of biotin on its carrier protein (BCCP) and then the CO(2) group is transferred by the transcarboxylase to acetyl-CoA to form malonyl-CoA. The sequence is that of Acetyl-coenzyme A carboxylase carboxyl transferase subunit beta from Staphylococcus haemolyticus (strain JCSC1435).